The following is a 325-amino-acid chain: Protein translocase subunit SecF (325 aa).

Helical transmembrane passes span 36–56 (GYIL…TKGF), 148–168 (LAQG…IYVG), 175–197 (LGFG…FSAL), 202–224 (DLTF…IVVF), 254–274 (TIIT…FGGP), and 281–301 (LALL…AIAI).

Belongs to the SecD/SecF family. SecF subfamily. Forms a complex with SecD. Part of the essential Sec protein translocation apparatus which comprises SecA, SecYEG and auxiliary proteins SecDF-YajC and YidC.

It localises to the cell inner membrane. In terms of biological role, part of the Sec protein translocase complex. Interacts with the SecYEG preprotein conducting channel. SecDF uses the proton motive force (PMF) to complete protein translocation after the ATP-dependent function of SecA. The protein is Protein translocase subunit SecF of Haemophilus influenzae (strain ATCC 51907 / DSM 11121 / KW20 / Rd).